A 116-amino-acid chain; its full sequence is Phosphoribosyl-ATP pyrophosphatase (116 aa).

It belongs to the PRA-PH family.

It is found in the cytoplasm. The catalysed reaction is 1-(5-phospho-beta-D-ribosyl)-ATP + H2O = 1-(5-phospho-beta-D-ribosyl)-5'-AMP + diphosphate + H(+). It participates in amino-acid biosynthesis; L-histidine biosynthesis; L-histidine from 5-phospho-alpha-D-ribose 1-diphosphate: step 2/9. The protein is Phosphoribosyl-ATP pyrophosphatase of Bordetella avium (strain 197N).